We begin with the raw amino-acid sequence, 310 residues long: Ribosomal protein uL3 glutamine methyltransferase (310 aa).

It belongs to the protein N5-glutamine methyltransferase family. PrmB subfamily.

The catalysed reaction is L-glutaminyl-[ribosomal protein uL3] + S-adenosyl-L-methionine = N(5)-methyl-L-glutaminyl-[ribosomal protein uL3] + S-adenosyl-L-homocysteine + H(+). Its function is as follows. Specifically methylates large ribosomal subunit protein uL3 on 'Gln-150'. The polypeptide is Ribosomal protein uL3 glutamine methyltransferase (Salmonella typhi).